The sequence spans 467 residues: Dynactin subunit 4 (467 aa).

Alanine 2 carries the post-translational modification N-acetylalanine. A coiled-coil region spans residues 152–172 (QQLAQKEKVERDRKKLARRRN). Residue serine 203 is modified to Phosphoserine. Residue lysine 222 forms a Glycyl lysine isopeptide (Lys-Gly) (interchain with G-Cter in SUMO2) linkage. Threonine 414 bears the Phosphothreonine mark.

It belongs to the dynactin subunit 4 family. Subunit of dynactin, a multiprotein complex part of a tripartite complex with dynein and a adapter, such as BICDL1, BICD2 or HOOK3. The dynactin complex is built around ACTR1A/ACTB filament and consists of an actin-related filament composed of a shoulder domain, a pointed end and a barbed end. Its length is defined by its flexible shoulder domain. The soulder is composed of 2 DCTN1 subunits, 4 DCTN2 and 2 DCTN3. The 4 DCNT2 (via N-terminus) bind the ACTR1A filament and act as molecular rulers to determine the length. The pointed end is important for binding dynein-dynactin cargo adapters. Consists of 4 subunits: ACTR10, DCNT4, DCTN5 and DCTN6. The barbed end is composed of a CAPZA1:CAPZB heterodimers, which binds ACTR1A/ACTB filament and dynactin and stabilizes dynactin. Interacts with ATP7B, but not ATP7A, in a copper-dependent manner. Interacts with ANK2; this interaction is required for localization at costameres. Interacts with N4BP2L1.

The protein resides in the cytoplasm. Its subcellular location is the cytoskeleton. It localises to the microtubule organizing center. The protein localises to the centrosome. It is found in the stress fiber. The protein resides in the cell cortex. Its subcellular location is the myofibril. It localises to the sarcomere. Part of the dynactin complex that activates the molecular motor dynein for ultra-processive transport along microtubules. The protein is Dynactin subunit 4 (Dctn4) of Mus musculus (Mouse).